Reading from the N-terminus, the 557-residue chain is Dihydroxy-acid dehydratase (557 aa).

Residue Cys-50 coordinates [2Fe-2S] cluster. Mg(2+) is bound at residue Asp-82. Cys-123 provides a ligand contact to [2Fe-2S] cluster. Mg(2+) is bound by residues Asp-124 and Lys-125. Position 125 is an N6-carboxylysine (Lys-125). [2Fe-2S] cluster is bound at residue Cys-195. Glu-447 serves as a coordination point for Mg(2+). Ser-473 (proton acceptor) is an active-site residue.

Belongs to the IlvD/Edd family. In terms of assembly, homodimer. Requires [2Fe-2S] cluster as cofactor. Mg(2+) serves as cofactor.

It carries out the reaction (2R)-2,3-dihydroxy-3-methylbutanoate = 3-methyl-2-oxobutanoate + H2O. The catalysed reaction is (2R,3R)-2,3-dihydroxy-3-methylpentanoate = (S)-3-methyl-2-oxopentanoate + H2O. The protein operates within amino-acid biosynthesis; L-isoleucine biosynthesis; L-isoleucine from 2-oxobutanoate: step 3/4. It participates in amino-acid biosynthesis; L-valine biosynthesis; L-valine from pyruvate: step 3/4. In terms of biological role, functions in the biosynthesis of branched-chain amino acids. Catalyzes the dehydration of (2R,3R)-2,3-dihydroxy-3-methylpentanoate (2,3-dihydroxy-3-methylvalerate) into 2-oxo-3-methylpentanoate (2-oxo-3-methylvalerate) and of (2R)-2,3-dihydroxy-3-methylbutanoate (2,3-dihydroxyisovalerate) into 2-oxo-3-methylbutanoate (2-oxoisovalerate), the penultimate precursor to L-isoleucine and L-valine, respectively. The polypeptide is Dihydroxy-acid dehydratase (Burkholderia mallei (strain NCTC 10247)).